An 82-amino-acid chain; its full sequence is ATP synthase subunit c (82 aa).

2 helical membrane-spanning segments follow: residues 7-27 (FVAL…CIGI) and 53-73 (FLLA…AMMF).

It belongs to the ATPase C chain family. In terms of assembly, F-type ATPases have 2 components, F(1) - the catalytic core - and F(0) - the membrane proton channel. F(1) has five subunits: alpha(3), beta(3), gamma(1), delta(1), epsilon(1). F(0) has three main subunits: a(1), b(2) and c(10-14). The alpha and beta chains form an alternating ring which encloses part of the gamma chain. F(1) is attached to F(0) by a central stalk formed by the gamma and epsilon chains, while a peripheral stalk is formed by the delta and b chains.

It localises to the cell inner membrane. F(1)F(0) ATP synthase produces ATP from ADP in the presence of a proton or sodium gradient. F-type ATPases consist of two structural domains, F(1) containing the extramembraneous catalytic core and F(0) containing the membrane proton channel, linked together by a central stalk and a peripheral stalk. During catalysis, ATP synthesis in the catalytic domain of F(1) is coupled via a rotary mechanism of the central stalk subunits to proton translocation. In terms of biological role, key component of the F(0) channel; it plays a direct role in translocation across the membrane. A homomeric c-ring of between 10-14 subunits forms the central stalk rotor element with the F(1) delta and epsilon subunits. This chain is ATP synthase subunit c, found in Polaromonas sp. (strain JS666 / ATCC BAA-500).